An 82-amino-acid polypeptide reads, in one-letter code: Small ribosomal subunit protein bS16 (82 aa).

It belongs to the bacterial ribosomal protein bS16 family.

The polypeptide is Small ribosomal subunit protein bS16 (Vibrio cholerae serotype O1 (strain ATCC 39541 / Classical Ogawa 395 / O395)).